Consider the following 271-residue polypeptide: RELT-like protein 1 (271 aa).

Residues 1–23 form the signal peptide; sequence MAPRALPGSAVLAAAVFVGGAVS. The Extracellular segment spans residues 24–57; the sequence is SPLVAPDNGSSRTLHSRTETTPSPSNDTGNGHPE. Residues 28–53 form a disordered region; it reads APDNGSSRTLHSRTETTPSPSNDTGN. N-linked (GlcNAc...) asparagine glycans are attached at residues Asn31 and Asn49. The segment covering 31 to 52 has biased composition (polar residues); the sequence is NGSSRTLHSRTETTPSPSNDTG. A helical transmembrane segment spans residues 58–78; that stretch reads YIAYALVPVFFIMGLFGVLIC. At 79 to 271 the chain is on the cytoplasmic side; the sequence is HLLKKKGYRC…PVKRERSGTE (193 aa). The stretch at 89–113 forms a coiled coil; that stretch reads TTEAEQDIEEEKVEKIELNDSVNEN. Residues Ser109 and Ser114 each carry the phosphoserine modification. Disordered regions lie at residues 145–173 and 233–271; these read DPES…TPGK and VEHK…SGTE. Positions 155–165 are enriched in pro residues; that stretch reads PGSPPVSPGPL. Positions 233-244 are enriched in basic and acidic residues; that stretch reads VEHKSNQKERRS. Phosphoserine is present on residues Ser244 and Ser247.

This sequence belongs to the RELT family. Interacts with RELT, RELL2 and OXSR1. Interacts with PLSCR1. Post-translationally, phosphorylated in vitro by OXSR1. In terms of tissue distribution, widely expressed. Expressed at highest levels in the placenta, skeletal muscle, spleen and testis.

The protein localises to the cell membrane. Induces activation of MAPK14/p38 cascade, when overexpressed. Induces apoptosis, when overexpressed. This is RELT-like protein 1 (RELL1) from Homo sapiens (Human).